Here is a 121-residue protein sequence, read N- to C-terminus: Prefoldin subunit beta (121 aa).

Belongs to the prefoldin subunit beta family. In terms of assembly, heterohexamer of two alpha and four beta subunits.

The protein localises to the cytoplasm. Molecular chaperone capable of stabilizing a range of proteins. Seems to fulfill an ATP-independent, HSP70-like function in archaeal de novo protein folding. The protein is Prefoldin subunit beta (pfdB) of Methanothermobacter thermautotrophicus (strain ATCC 29096 / DSM 1053 / JCM 10044 / NBRC 100330 / Delta H) (Methanobacterium thermoautotrophicum).